The primary structure comprises 269 residues: Malonyl-[acyl-carrier protein] O-methyltransferase (269 aa).

This sequence belongs to the methyltransferase superfamily.

It catalyses the reaction malonyl-[ACP] + S-adenosyl-L-methionine = malonyl-[ACP] methyl ester + S-adenosyl-L-homocysteine. It functions in the pathway cofactor biosynthesis; biotin biosynthesis. Converts the free carboxyl group of a malonyl-thioester to its methyl ester by transfer of a methyl group from S-adenosyl-L-methionine (SAM). It allows to synthesize pimeloyl-ACP via the fatty acid synthetic pathway. The polypeptide is Malonyl-[acyl-carrier protein] O-methyltransferase (Bacillus anthracis).